Consider the following 404-residue polypeptide: Deoxyguanosinetriphosphate triphosphohydrolase-like protein 1 (404 aa).

Residues 75 to 219 (RLTHSIEVAQ…AAIADDIAYN (145 aa)) enclose the HD domain.

It belongs to the dGTPase family. Type 2 subfamily.

The sequence is that of Deoxyguanosinetriphosphate triphosphohydrolase-like protein 1 from Mesorhizobium japonicum (strain LMG 29417 / CECT 9101 / MAFF 303099) (Mesorhizobium loti (strain MAFF 303099)).